Reading from the N-terminus, the 185-residue chain is ATP synthase subunit b (185 aa).

Residues 26–46 traverse the membrane as a helical segment; the sequence is LVLIGFAILLFIVIKFVVPMF.

Belongs to the ATPase B chain family. In terms of assembly, F-type ATPases have 2 components, F(1) - the catalytic core - and F(0) - the membrane proton channel. F(1) has five subunits: alpha(3), beta(3), gamma(1), delta(1), epsilon(1). F(0) has three main subunits: a(1), b(2) and c(10-14). The alpha and beta chains form an alternating ring which encloses part of the gamma chain. F(1) is attached to F(0) by a central stalk formed by the gamma and epsilon chains, while a peripheral stalk is formed by the delta and b chains.

The protein resides in the cell membrane. Its function is as follows. F(1)F(0) ATP synthase produces ATP from ADP in the presence of a proton or sodium gradient. F-type ATPases consist of two structural domains, F(1) containing the extramembraneous catalytic core and F(0) containing the membrane proton channel, linked together by a central stalk and a peripheral stalk. During catalysis, ATP synthesis in the catalytic domain of F(1) is coupled via a rotary mechanism of the central stalk subunits to proton translocation. In terms of biological role, component of the F(0) channel, it forms part of the peripheral stalk, linking F(1) to F(0). The sequence is that of ATP synthase subunit b from Renibacterium salmoninarum (strain ATCC 33209 / DSM 20767 / JCM 11484 / NBRC 15589 / NCIMB 2235).